We begin with the raw amino-acid sequence, 276 residues long: uncharacterized protein (276 aa).

The AB hydrolase-1 domain maps to 20-137; that stretch reads PVLIFIPGAN…PPINTFLPDS (118 aa). The segment at 57–76 is disordered; sequence GESELTEPLPDSASNPDSDY.

Belongs to the AB hydrolase superfamily.

This is an uncharacterized protein from Staphylococcus aureus (strain COL).